Reading from the N-terminus, the 413-residue chain is Tyrosine--tRNA ligase (413 aa).

The 'HIGH' region motif lies at 59–68; the sequence is PTAPDIHLGH. The short motif at 243-247 is the 'KMSKS' region element; sequence KMSKS. Lys-246 is an ATP binding site. The 61-residue stretch at 351-411 folds into the S4 RNA-binding domain; the sequence is LAIGQLLKQA…GKRRFARVTL (61 aa).

The protein belongs to the class-I aminoacyl-tRNA synthetase family. TyrS type 2 subfamily. Homodimer.

Its subcellular location is the cytoplasm. It catalyses the reaction tRNA(Tyr) + L-tyrosine + ATP = L-tyrosyl-tRNA(Tyr) + AMP + diphosphate + H(+). In terms of biological role, catalyzes the attachment of tyrosine to tRNA(Tyr) in a two-step reaction: tyrosine is first activated by ATP to form Tyr-AMP and then transferred to the acceptor end of tRNA(Tyr). This chain is Tyrosine--tRNA ligase, found in Burkholderia thailandensis (strain ATCC 700388 / DSM 13276 / CCUG 48851 / CIP 106301 / E264).